The sequence spans 701 residues: Type 3 secretion system secretin (701 aa).

The first 21 residues, 1 to 21 (MRKALMWLPLLLIGLSPATWA), serve as a signal peptide directing secretion. The span at 229–238 (RGNGLAGGGS) shows a compositional bias: gly residues. Residues 229–252 (RGNGLAGGGSPDTPSLPMSSSGLD) form a disordered region. A compositionally biased stretch (polar residues) spans 240–252 (DTPSLPMSSSGLD).

This sequence belongs to the bacterial secretin family. T3SS SctC subfamily. As to quaternary structure, the core secretion machinery of the T3SS is composed of approximately 20 different proteins, including cytoplasmic components, a base, an export apparatus and a needle. This subunit is part of the base, which anchors the injectisome in the bacterial cell envelope. Forms a stable homooligomeric complex.

It localises to the cell outer membrane. Component of the type III secretion system (T3SS), also called injectisome, which is used to inject bacterial effector proteins into eukaryotic host cells. Forms a ring-shaped multimeric structure with an apparent central pore in the outer membrane. Involved in the secretion of a proteinaceous elicitor of the hypersensitivity response in plants. In Pseudomonas syringae pv. syringae, this protein is Type 3 secretion system secretin.